We begin with the raw amino-acid sequence, 566 residues long: Transcription factor tasR (566 aa).

Low complexity predominate over residues 1–30 (MISASRMEESASSSSLSDAAAPPPGAALQS). A disordered region spans residues 1–31 (MISASRMEESASSSSLSDAAAPPPGAALQSI). The zn(2)-C6 fungal-type DNA-binding region spans 35 to 68 (CDRCRFHKLKCNVPAAGHGGPVPCERCTRAKVPC). 4 disordered regions span residues 72–174 (RRRR…PGQH), 346–382 (EFIV…GGDD), 422–453 (SESD…TGTA), and 500–551 (RGVG…GLGG). Low complexity-rich tracts occupy residues 89 to 108 (PTRR…TSAA) and 359 to 378 (SESS…NNEA). Residues 501 to 532 (GVGGGGGGGGGGGGGGGGGVGGGGGGGGGPGG) show a composition bias toward gly residues.

Its subcellular location is the nucleus. Functionally, transcription factor that regulates the expression of the gene cluster that mediates the biosynthesis of the tetramic acids Sch210971 and Sch210972, potential anti-HIV fungal natural product that contain a decalin core. The polypeptide is Transcription factor tasR (Hapsidospora irregularis).